We begin with the raw amino-acid sequence, 380 residues long: GDP-mannose:cellobiosyl-diphosphopolyprenol alpha-mannosyltransferase (380 aa).

Belongs to the glycosyltransferase group 1 family. Glycosyltransferase 4 subfamily.

It carries out the reaction beta-D-Glc-(1-&gt;4)-alpha-D-Glc-di-trans,octa-cis-undecaprenyl diphosphate + GDP-alpha-D-mannose = alpha-D-Man-(1-&gt;3)-beta-D-Glc-(1-&gt;4)-alpha-D-Glc-1-di-trans,octa-cis-undecaprenyl diphosphate + GDP + H(+). In terms of biological role, involved in the biosynthesis of the exopolysaccharide xanthan, a polymer that is comprised of repeating pentasaccharide units with the structure of a beta-(1,4)-linked D-glucose backbone with trisaccharide side chains composed of mannose-beta-(1,4)-glucuronic acid-beta-(1,2)-mannose attached to alternate glucose residues in the backbone by alpha-(1,3) linkages. Xanthan is involved in pathogenicity but has also been used in a variety of applications as a specialty polymer for commercial applications, including food additives, where they act as viscosifying, stabilizing, emulsifying, or gelling agents. In Xanthomonas oryzae pv. oryzae (strain PXO99A), this protein is GDP-mannose:cellobiosyl-diphosphopolyprenol alpha-mannosyltransferase (gumH).